A 379-amino-acid polypeptide reads, in one-letter code: Adenylosuccinate synthetase (379 aa).

Residues 11–17 (GDEGKGK) and 39–41 (GHT) contribute to the GTP site. Asp-12 functions as the Proton acceptor in the catalytic mechanism. Mg(2+)-binding residues include Asp-12 and Gly-39. IMP contacts are provided by residues 12–15 (DEGK), 37–40 (NAGH), Thr-127, Arg-141, Gln-223, Thr-238, and Arg-302. Catalysis depends on His-40, which acts as the Proton donor. 298–304 (TTTGRGR) contacts substrate. Residues Arg-304 and 330–332 (KLD) each bind GTP.

Belongs to the adenylosuccinate synthetase family. Homodimer. Mg(2+) is required as a cofactor.

Its subcellular location is the cytoplasm. It catalyses the reaction IMP + L-aspartate + GTP = N(6)-(1,2-dicarboxyethyl)-AMP + GDP + phosphate + 2 H(+). It functions in the pathway purine metabolism; AMP biosynthesis via de novo pathway; AMP from IMP: step 1/2. Its function is as follows. Plays an important role in the de novo pathway of purine nucleotide biosynthesis. Catalyzes the first committed step in the biosynthesis of AMP from IMP. The sequence is that of Adenylosuccinate synthetase from Methanosarcina mazei (strain ATCC BAA-159 / DSM 3647 / Goe1 / Go1 / JCM 11833 / OCM 88) (Methanosarcina frisia).